The following is a 385-amino-acid chain: Protein hunchback (385 aa).

Disordered regions lie at residues 1 to 94 and 124 to 216; these read IGGI…YDAM and ESRA…PGLR. Low complexity predominate over residues 63-77; it reads SASPSSSSKDSNGHS. Basic and acidic residues-rich tracts occupy residues 126 to 135 and 173 to 203; these read RASDARDHSP and PERR…REGS. 4 C2H2-type zinc fingers span residues 229 to 251, 258 to 280, 286 to 308, and 314 to 338; these read FKCK…SKEH, LCCR…MRNH, FQCS…LKSH, and YRCA…KYQH. Residues 361–385 form a disordered region; that stretch reads TRRGPKQKPLSKIFEQQTGTNNHSP. The span at 374 to 385 shows a compositional bias: polar residues; that stretch reads FEQQTGTNNHSP.

It belongs to the hunchback C2H2-type zinc-finger protein family.

It localises to the nucleus. In terms of biological role, gap class segmentation protein that controls development of head structures. The sequence is that of Protein hunchback (hb) from Bombyx mori (Silk moth).